Reading from the N-terminus, the 189-residue chain is Peptidyl-tRNA hydrolase (189 aa).

Y14 contributes to the tRNA binding site. H19 serves as the catalytic Proton acceptor. The tRNA site is built by Y64, N66, and N112.

The protein belongs to the PTH family. In terms of assembly, monomer.

It is found in the cytoplasm. The catalysed reaction is an N-acyl-L-alpha-aminoacyl-tRNA + H2O = an N-acyl-L-amino acid + a tRNA + H(+). Hydrolyzes ribosome-free peptidyl-tRNAs (with 1 or more amino acids incorporated), which drop off the ribosome during protein synthesis, or as a result of ribosome stalling. Functionally, catalyzes the release of premature peptidyl moieties from peptidyl-tRNA molecules trapped in stalled 50S ribosomal subunits, and thus maintains levels of free tRNAs and 50S ribosomes. The chain is Peptidyl-tRNA hydrolase from Dehalococcoides mccartyi (strain ATCC BAA-2266 / KCTC 15142 / 195) (Dehalococcoides ethenogenes (strain 195)).